We begin with the raw amino-acid sequence, 245 residues long: MAAAAMHTSAEFINLKPNMWKKNPVRASGSCCLGSSSGDEISRKRKLPILLFDVMDTIVRDPFYQDVPAFFGMPMKQLLECKHPMVWIEFEKGLIDEEELARNFFIDGRDFDLEGLKECMRSGYSYLDGMQELLQTLAADDFEIHAFTNYPIWYNIIEDKLKLSAYLSWTFCSCIAGKRKPDPEFYLEVVGHLGVEPCDCIFIDDRPTNVKCAIEIGMGGLCFENADSLAKDLSDLGINVSVPKL.

A chloroplast-targeting transit peptide spans 1–26; that stretch reads MAAAAMHTSAEFINLKPNMWKKNPVR.

It belongs to the HAD-like hydrolase superfamily. DOG/GPP family. As to quaternary structure, homodimer. It depends on Mg(2+) as a cofactor.

The protein localises to the plastid. Its subcellular location is the chloroplast stroma. The catalysed reaction is FMN + H2O = riboflavin + phosphate. It carries out the reaction 5-amino-6-(5-phospho-D-ribitylamino)uracil + H2O = 5-amino-6-(D-ribitylamino)uracil + phosphate. FMN hydrolase that catalyzes the dephosphorylation of flavin mononucleotide (FMN) to riboflavin. Can also dephosphorylate 5-amino-6-(5-phospho-D-ribitylamino)uracil, also known as ARPP. Not required for riboflavin biosynthesis in planta, but may help maintaining flavin homeostasis within chloroplasts. In Arabidopsis thaliana (Mouse-ear cress), this protein is Flavin mononucleotide hydrolase 1, chloroplatic.